The sequence spans 135 residues: MAGRGKAIGSGAAKKAMSRSSKAGLQFPVGRIARFLKAGKYAERVGAGAPVYLAAVLEYLAAEVLELAGNAARDNKKTRIVPRHIQLAVRNDEELSRLLGTVTIASGGVMPNIHNLLLPKKAGGSAKAAAGDDDN.

This sequence belongs to the histone H2A family. As to quaternary structure, the nucleosome is a histone octamer containing two molecules each of H2A, H2B, H3 and H4 assembled in one H3-H4 heterotetramer and two H2A-H2B heterodimers. The octamer wraps approximately 147 bp of DNA.

The protein localises to the nucleus. Its subcellular location is the chromosome. Core component of nucleosome. Nucleosomes wrap and compact DNA into chromatin, limiting DNA accessibility to the cellular machineries which require DNA as a template. Histones thereby play a central role in transcription regulation, DNA repair, DNA replication and chromosomal stability. DNA accessibility is regulated via a complex set of post-translational modifications of histones, also called histone code, and nucleosome remodeling. In Oryza sativa subsp. indica (Rice), this protein is Probable histone H2A.2.